Consider the following 252-residue polypeptide: Hydroxyacylglutathione hydrolase (252 aa).

Zn(2+)-binding residues include His-54, His-56, Asp-58, His-59, His-111, Asp-130, and His-170.

It belongs to the metallo-beta-lactamase superfamily. Glyoxalase II family. As to quaternary structure, monomer. Zn(2+) serves as cofactor.

It carries out the reaction an S-(2-hydroxyacyl)glutathione + H2O = a 2-hydroxy carboxylate + glutathione + H(+). It functions in the pathway secondary metabolite metabolism; methylglyoxal degradation; (R)-lactate from methylglyoxal: step 2/2. Thiolesterase that catalyzes the hydrolysis of S-D-lactoyl-glutathione to form glutathione and D-lactic acid. The sequence is that of Hydroxyacylglutathione hydrolase from Francisella philomiragia subsp. philomiragia (strain ATCC 25017 / CCUG 19701 / FSC 153 / O#319-036).